A 20-amino-acid chain; its full sequence is L-amino-acid oxidase L1 (20 aa).

It belongs to the flavin monoamine oxidase family. FIG1 subfamily. In terms of assembly, monomer. This is in contrast with most of its orthologs, that are non-covalently linked homodimers. FAD is required as a cofactor. N-glycosylated. Expressed by the venom gland.

The protein resides in the secreted. It carries out the reaction an L-alpha-amino acid + O2 + H2O = a 2-oxocarboxylate + H2O2 + NH4(+). The enzyme catalyses L-leucine + O2 + H2O = 4-methyl-2-oxopentanoate + H2O2 + NH4(+). It catalyses the reaction L-phenylalanine + O2 + H2O = 3-phenylpyruvate + H2O2 + NH4(+). The catalysed reaction is L-tryptophan + O2 + H2O = indole-3-pyruvate + H2O2 + NH4(+). It carries out the reaction L-methionine + O2 + H2O = 4-methylsulfanyl-2-oxobutanoate + H2O2 + NH4(+). The enzyme catalyses L-isoleucine + O2 + H2O = (S)-3-methyl-2-oxopentanoate + H2O2 + NH4(+). It catalyses the reaction L-tyrosine + O2 + H2O = 3-(4-hydroxyphenyl)pyruvate + H2O2 + NH4(+). Catalyzes an oxidative deamination of predominantly hydrophobic and aromatic L-amino acids, thus producing hydrogen peroxide that may contribute to the diverse toxic effects of this enzyme. Is active on L-Met, L-Ile, L-Leu, L-Phe, L-Trp, and L-Tyr. Exhibits diverse biological activities, such as hemorrhage, hemolysis, edema, apoptosis of vascular endothelial cells or tumor cell lines, antibacterial and antiparasitic activities, as well as regulation of platelet aggregation. Its effect on platelets is controversial, since it either induces aggregation or inhibits agonist-induced aggregation. These different effects are probably due to different experimental conditions. The chain is L-amino-acid oxidase L1 from Daboia russelii (Russel's viper).